A 132-amino-acid chain; its full sequence is UPF0102 protein Achl_2213 (132 aa).

Belongs to the UPF0102 family.

The sequence is that of UPF0102 protein Achl_2213 from Pseudarthrobacter chlorophenolicus (strain ATCC 700700 / DSM 12829 / CIP 107037 / JCM 12360 / KCTC 9906 / NCIMB 13794 / A6) (Arthrobacter chlorophenolicus).